Reading from the N-terminus, the 454-residue chain is tRNA(Ile)-lysidine synthase (454 aa).

31 to 36 (SGGADS) is a binding site for ATP.

The protein belongs to the tRNA(Ile)-lysidine synthase family.

It localises to the cytoplasm. It catalyses the reaction cytidine(34) in tRNA(Ile2) + L-lysine + ATP = lysidine(34) in tRNA(Ile2) + AMP + diphosphate + H(+). Ligates lysine onto the cytidine present at position 34 of the AUA codon-specific tRNA(Ile) that contains the anticodon CAU, in an ATP-dependent manner. Cytidine is converted to lysidine, thus changing the amino acid specificity of the tRNA from methionine to isoleucine. The sequence is that of tRNA(Ile)-lysidine synthase from Porphyromonas gingivalis (strain ATCC BAA-308 / W83).